We begin with the raw amino-acid sequence, 308 residues long: tRNA dimethylallyltransferase (308 aa).

11-18 provides a ligand contact to ATP; the sequence is GSTATGKS. 13–18 contacts substrate; it reads TATGKS. The tract at residues 36-39 is interaction with substrate tRNA; sequence DSVQ.

It belongs to the IPP transferase family. Monomer. It depends on Mg(2+) as a cofactor.

The catalysed reaction is adenosine(37) in tRNA + dimethylallyl diphosphate = N(6)-dimethylallyladenosine(37) in tRNA + diphosphate. Functionally, catalyzes the transfer of a dimethylallyl group onto the adenine at position 37 in tRNAs that read codons beginning with uridine, leading to the formation of N6-(dimethylallyl)adenosine (i(6)A). The chain is tRNA dimethylallyltransferase from Bdellovibrio bacteriovorus (strain ATCC 15356 / DSM 50701 / NCIMB 9529 / HD100).